The primary structure comprises 284 residues: D-tagatose-1,6-bisphosphate aldolase subunit GatY (284 aa).

Asp82 acts as the Proton donor in catalysis. His83 and His180 together coordinate Zn(2+). Gly181 contributes to the dihydroxyacetone phosphate binding site. Zn(2+) is bound at residue His208. Dihydroxyacetone phosphate is bound by residues 209–211 and 230–233; these read GAS and NVAT.

This sequence belongs to the class II fructose-bisphosphate aldolase family. TagBP aldolase GatY subfamily. As to quaternary structure, forms a complex with GatZ. It depends on Zn(2+) as a cofactor.

It catalyses the reaction D-tagatofuranose 1,6-bisphosphate = D-glyceraldehyde 3-phosphate + dihydroxyacetone phosphate. Its pathway is carbohydrate metabolism; D-tagatose 6-phosphate degradation; D-glyceraldehyde 3-phosphate and glycerone phosphate from D-tagatose 6-phosphate: step 2/2. In terms of biological role, catalytic subunit of the tagatose-1,6-bisphosphate aldolase GatYZ, which catalyzes the reversible aldol condensation of dihydroxyacetone phosphate (DHAP or glycerone-phosphate) with glyceraldehyde 3-phosphate (G3P) to produce tagatose 1,6-bisphosphate (TBP). Requires GatZ subunit for full activity and stability. Is involved in the catabolism of galactitol. The protein is D-tagatose-1,6-bisphosphate aldolase subunit GatY of Shigella flexneri serotype 5b (strain 8401).